Here is a 408-residue protein sequence, read N- to C-terminus: Adenylosuccinate synthetase (408 aa).

GTP is bound by residues Gly12–Lys18 and Gly40–Thr42. The active-site Proton acceptor is the Asp13. Mg(2+) contacts are provided by Asp13 and Gly40. Residues Asp13–Lys16, Asn38–His41, Thr121, Arg135, Gln213, Thr228, and Arg292 each bind IMP. Residue His41 is the Proton donor of the active site. Substrate is bound at residue Thr288–Arg294. Residues Arg294, Lys320–Asp322, and Ser393–Ser395 each bind GTP.

Belongs to the adenylosuccinate synthetase family. As to quaternary structure, homodimer. Requires Mg(2+) as cofactor.

The protein localises to the cytoplasm. It catalyses the reaction IMP + L-aspartate + GTP = N(6)-(1,2-dicarboxyethyl)-AMP + GDP + phosphate + 2 H(+). Its pathway is purine metabolism; AMP biosynthesis via de novo pathway; AMP from IMP: step 1/2. In terms of biological role, plays an important role in the de novo pathway of purine nucleotide biosynthesis. Catalyzes the first committed step in the biosynthesis of AMP from IMP. The polypeptide is Adenylosuccinate synthetase (Thermus thermophilus (strain ATCC BAA-163 / DSM 7039 / HB27)).